Reading from the N-terminus, the 443-residue chain is Thymidine phosphorylase (443 aa).

Belongs to the thymidine/pyrimidine-nucleoside phosphorylase family. As to quaternary structure, homodimer.

It catalyses the reaction thymidine + phosphate = 2-deoxy-alpha-D-ribose 1-phosphate + thymine. It functions in the pathway pyrimidine metabolism; dTMP biosynthesis via salvage pathway; dTMP from thymine: step 1/2. In terms of biological role, the enzymes which catalyze the reversible phosphorolysis of pyrimidine nucleosides are involved in the degradation of these compounds and in their utilization as carbon and energy sources, or in the rescue of pyrimidine bases for nucleotide synthesis. The sequence is that of Thymidine phosphorylase from Shewanella baltica (strain OS185).